The following is a 121-amino-acid chain: Ribonuclease P protein component (121 aa).

Belongs to the RnpA family. Consists of a catalytic RNA component (M1 or rnpB) and a protein subunit.

The enzyme catalyses Endonucleolytic cleavage of RNA, removing 5'-extranucleotides from tRNA precursor.. Functionally, RNaseP catalyzes the removal of the 5'-leader sequence from pre-tRNA to produce the mature 5'-terminus. It can also cleave other RNA substrates such as 4.5S RNA. The protein component plays an auxiliary but essential role in vivo by binding to the 5'-leader sequence and broadening the substrate specificity of the ribozyme. The polypeptide is Ribonuclease P protein component (Neisseria gonorrhoeae (strain ATCC 700825 / FA 1090)).